The chain runs to 93 residues: OMEGA-ectatommitoxin(02)-Rm1c (93 aa).

A signal peptide spans 1 to 30 (MKDSYISIVIAYLMVTFILVSSMPIEGEKG). 3 disulfides stabilise this stretch: cysteine 39–cysteine 52, cysteine 47–cysteine 68, and cysteine 70–cysteine 79. The EGF-like domain occupies 43-80 (YENYCFNGKCVHVVAQDEPGKPCYSCICDEFYIGERCG).

Belongs to the EGF domain peptide family. In terms of tissue distribution, expressed by the venom gland.

It is found in the secreted. In terms of biological role, ant peptide with probable defensive activity which acts as a potent agonist of the mammalian epidermal growth factor receptor (EGFR). Mimics, both structurally and functionally, vertebrate epidermal growth factor (EGF) peptide hormones. In vivo, intraplantar injection in mice causes long-lasting (several days) hypersensitivity of the injected paw to both mechanical and thermal stimuli. Its long-lasting effect is unusual for venom toxins whose effects are usually immediate. One possible explanation is that it would reduce the duration of a nest attack, discourage future attacks, or enhance the actions of subsequent exposure to other pain-inducing venom peptides. The sequence is that of OMEGA-ectatommitoxin(02)-Rm1c from Rhytidoponera metallica (Australian green-headed ant).